The chain runs to 81 residues: Defensin-like protein b (81 aa).

The signal sequence occupies residues 1–26; the sequence is MRNATFFIVFYVFISLVLSNVQDVTA. Intrachain disulfides connect cysteine 31–cysteine 81, cysteine 42–cysteine 66, cysteine 50–cysteine 76, and cysteine 64–cysteine 78.

It belongs to the DEFL family. Expressed in microspores and in young and mature anthers.

It is found in the secreted. Involved in self-incompatibility. This chain is Defensin-like protein b (SCRb-1), found in Arabidopsis lyrata (Lyre-leaved rock-cress).